Consider the following 320-residue polypeptide: Acetyl-coenzyme A carboxylase carboxyl transferase subunit beta (320 aa).

The 270-residue stretch at 25-294 folds into the CoA carboxyltransferase N-terminal domain; sequence VWTKCDSCGQ…AKDEDELLGE (270 aa). Zn(2+) is bound by residues Cys-29, Cys-32, Cys-48, and Cys-51. Residues 29 to 51 form a C4-type zinc finger; sequence CDSCGQVLYRAELERNLEVCPKC. Residues 295 to 310 are compositionally biased toward acidic residues; sequence EMIADDIESSDNEPEI. The interval 295-320 is disordered; that stretch reads EMIADDIESSDNEPEINIETNKKEDV.

The protein belongs to the AccD/PCCB family. As to quaternary structure, acetyl-CoA carboxylase is a heterohexamer composed of biotin carboxyl carrier protein (AccB), biotin carboxylase (AccC) and two subunits each of ACCase subunit alpha (AccA) and ACCase subunit beta (AccD). It depends on Zn(2+) as a cofactor.

The protein localises to the cytoplasm. The catalysed reaction is N(6)-carboxybiotinyl-L-lysyl-[protein] + acetyl-CoA = N(6)-biotinyl-L-lysyl-[protein] + malonyl-CoA. Its pathway is lipid metabolism; malonyl-CoA biosynthesis; malonyl-CoA from acetyl-CoA: step 1/1. Component of the acetyl coenzyme A carboxylase (ACC) complex. Biotin carboxylase (BC) catalyzes the carboxylation of biotin on its carrier protein (BCCP) and then the CO(2) group is transferred by the transcarboxylase to acetyl-CoA to form malonyl-CoA. This is Acetyl-coenzyme A carboxylase carboxyl transferase subunit beta from Proteus mirabilis (strain HI4320).